The chain runs to 289 residues: ATP synthase gamma chain (289 aa).

It belongs to the ATPase gamma chain family. F-type ATPases have 2 components, CF(1) - the catalytic core - and CF(0) - the membrane proton channel. CF(1) has five subunits: alpha(3), beta(3), gamma(1), delta(1), epsilon(1). CF(0) has three main subunits: a, b and c.

It is found in the cell membrane. Produces ATP from ADP in the presence of a proton gradient across the membrane. The gamma chain is believed to be important in regulating ATPase activity and the flow of protons through the CF(0) complex. This Lactococcus lactis subsp. lactis (strain IL1403) (Streptococcus lactis) protein is ATP synthase gamma chain.